Consider the following 705-residue polypeptide: Voltage-dependent calcium channel beta subunit-associated regulatory protein (705 aa).

The Extracellular portion of the chain corresponds to methionine 1–tyrosine 45. Asparagine 29 is a glycosylation site (N-linked (GlcNAc...) asparagine). The chain crosses the membrane as a helical; Signal-anchor for type III membrane protein span at residues valine 46 to valine 66. The Cytoplasmic segment spans residues leucine 67–alanine 705. 2 disordered regions span residues threonine 91–glutamate 113 and glycine 212–alanine 284. A compositionally biased stretch (polar residues) spans proline 245–glycine 254. Residues glycine 267–alanine 284 show a composition bias toward gly residues. 2 positions are modified to phosphoserine: serine 299 and serine 304. Disordered stretches follow at residues proline 316–glutamine 353, phenylalanine 369–aspartate 436, alanine 448–tyrosine 540, and histidine 559–serine 655. Positions threonine 344–glutamine 353 are enriched in acidic residues. Residues histidine 371 to alanine 382 show a composition bias toward pro residues. The segment covering leucine 383–proline 397 has biased composition (low complexity). Positions alanine 479–proline 488 are enriched in pro residues. Residues arginine 489–leucine 499 are compositionally biased toward basic and acidic residues. A phosphoserine mark is found at serine 507 and serine 528. Residues alanine 567–arginine 585 are compositionally biased toward basic residues. Residues glycine 591–alanine 614 show a composition bias toward low complexity. Serine 621 carries the post-translational modification Phosphoserine. Threonine 698 carries the phosphothreonine modification. A phosphoserine mark is found at serine 699 and serine 703.

In terms of assembly, interacts with voltage-dependent calcium channels CACNB1, CACNB2, CACNB3 and CACNB4 beta subunits; prevents their interaction with the CACNA1C alpha subunit thereby negatively regulating the activity of the corresponding calcium channels.

It localises to the cytoplasmic vesicle. The protein localises to the secretory vesicle. It is found in the synaptic vesicle membrane. The protein resides in the cell membrane. Its subcellular location is the cell projection. It localises to the growth cone. Functionally, negatively regulates voltage-gated calcium channels by preventing the interaction between their alpha and beta subunits. Thereby, negatively regulates calcium channels activity at the plasma membrane and indirectly inhibits calcium-regulated exocytosis. The polypeptide is Voltage-dependent calcium channel beta subunit-associated regulatory protein (Homo sapiens (Human)).